We begin with the raw amino-acid sequence, 292 residues long: Elongation factor Ts (292 aa).

The tract at residues 82-85 (TDFV) is involved in Mg(2+) ion dislocation from EF-Tu.

The protein belongs to the EF-Ts family.

Its subcellular location is the cytoplasm. In terms of biological role, associates with the EF-Tu.GDP complex and induces the exchange of GDP to GTP. It remains bound to the aminoacyl-tRNA.EF-Tu.GTP complex up to the GTP hydrolysis stage on the ribosome. The polypeptide is Elongation factor Ts (Legionella pneumophila (strain Lens)).